Reading from the N-terminus, the 193-residue chain is Ion-translocating oxidoreductase complex subunit B (193 aa).

The hydrophobic stretch occupies residues 1-26 (MSTMLIAVILLTLLALFFGVLLGFAA). In terms of domain architecture, 4Fe-4S spans 32 to 90 (EGNPIVDELEAILPQTQCGQCGYPGCRPYAEAIANGDKVNKCPPGGTATMEKLASLMGV). Cys49, Cys52, Cys57, Cys73, Cys114, Cys117, Cys120, Cys124, Cys144, Cys147, Cys150, and Cys154 together coordinate [4Fe-4S] cluster. 2 consecutive 4Fe-4S ferredoxin-type domains span residues 105-134 (KVAY…GAGK) and 136-164 (MHTV…MVPV).

It belongs to the 4Fe4S bacterial-type ferredoxin family. RnfB subfamily. The complex is composed of six subunits: RnfA, RnfB, RnfC, RnfD, RnfE and RnfG. It depends on [4Fe-4S] cluster as a cofactor.

The protein localises to the cell inner membrane. Functionally, part of a membrane-bound complex that couples electron transfer with translocation of ions across the membrane. In Shewanella oneidensis (strain ATCC 700550 / JCM 31522 / CIP 106686 / LMG 19005 / NCIMB 14063 / MR-1), this protein is Ion-translocating oxidoreductase complex subunit B.